Reading from the N-terminus, the 465-residue chain is Ras GTPase-activating protein-binding protein 1 (465 aa).

One can recognise an NTF2 domain in the interval 11 to 133 (VGREFVRQYY…FYVHNDIFRY (123 aa)). Glycyl lysine isopeptide (Lys-Gly) (interchain with G-Cter in ubiquitin) cross-links involve residues Lys36, Lys50, Lys59, Lys64, Lys76, and Lys123. The segment at 142-224 (VTEPQEESEE…EAALEEAAPD (83 aa)) is acidic disordered region. Thr143 bears the Phosphothreonine mark. Positions 144 to 330 (EPQEESEEEV…GEPGDVEPRR (187 aa)) are disordered. Composition is skewed to acidic residues over residues 145–157 (PQEESEEEVEEPE) and 184–205 (EHLEEPVVEPEPEPEPEPEPEP). Ser149 carries the post-translational modification Phosphoserine. A phosphoserine mark is found at Ser231, Ser248, and Ser251. Residues 248 to 257 (SWASVTSKNL) are compositionally biased toward polar residues. 2 stretches are compositionally biased toward basic and acidic residues: residues 295 to 305 (PQRDQRVREQR) and 316 to 330 (PIREAGEPGDVEPRR). In terms of domain architecture, RRM spans 338 to 413 (HQLFIGNLPH…VRLNVEEKKT (76 aa)). Residues Lys351 and Lys355 each participate in a glycyl lysine isopeptide (Lys-Gly) (interchain with G-Cter in ubiquitin) cross-link. At Ser371 the chain carries Phosphoserine. A Glycyl lysine isopeptide (Lys-Gly) (interchain with G-Cter in ubiquitin) cross-link involves residue Lys374. Residue Lys374 is modified to N6-acetyllysine; alternate. Residue Lys374 forms a Glycyl lysine isopeptide (Lys-Gly) (interchain with G-Cter in SUMO2); alternate linkage. Lys391 participates in a covalent cross-link: Glycyl lysine isopeptide (Lys-Gly) (interchain with G-Cter in ubiquitin); alternate. Positions 408–464 (VEEKKTRAAREGDRRDNRLRGPGGPRGGPSGGMRGPPRGGMVQKPGFGVGRGITTPR) are RG-rich region. Over residues 411 to 426 (KKTRAAREGDRRDNRL) the composition is skewed to basic and acidic residues. The tract at residues 411–465 (KKTRAAREGDRRDNRLRGPGGPRGGPSGGMRGPPRGGMVQKPGFGVGRGITTPRQ) is disordered. An Asymmetric dimethylarginine modification is found at Arg427. Over residues 428-445 (GPGGPRGGPSGGMRGPPR) the composition is skewed to gly residues. Arg433 is modified (asymmetric dimethylarginine; alternate). Omega-N-methylarginine; alternate occurs at positions 433, 445, 458, and 464. A Dimethylated arginine; alternate modification is found at Arg458.

As to quaternary structure, homodimer and oligomer. Component of a TAU mRNP complex, at least composed of IGF2BP1, ELAVL4 and G3BP1. Binds to the SH3 domain of Ras GTPase-activating protein (RASA1) in proliferating cells. No interaction in quiescent cells. Interacts (via NTF2 domain) with USP10; inhibiting stress granule formation by lowering G3BP1 valence. Interacts (via NTF2 domain) with CAPRIN1; promoting stress granule formation by lowering the saturation-concentration of G3BP1. Interacts (via NTF2 domain) with UBAP2L; promoting stress granule formation. Associates (via RG-rich region) with 40S ribosome subunits. Interacts with RPTOR and SPAG5; this complex is increased by oxidative stress. Interacts with ATXN2L. Interacts with STYXL1. Interacts with CGAS (via N-terminus); this interaction promotes the DNA-binding and activation of CGAS. Interacts (via C-terminus) with RIGI. Interacts with PABPC1. Interacts with QKI (isoforms QKI6 and QKI7); directing N(7)-methylguanine-containing mRNAs to stress granules. It depends on Mg(2+) as a cofactor. In terms of processing, phosphorylation of the acidic disordered region regulates stress granule assembly. RASA1-dependent phosphorylation of Ser-149 induces a conformational change that prevents self-association. Dephosphorylation after HRAS activation is required for stress granule assembly. Ser-149 phosphorylation induces partial nuclear localization. Post-translationally, arg-435 is dimethylated, probably to asymmetric dimethylarginine. Ubiquitinated by TRIM21 via 'Lys-63'-linked polyubiquitination in the NTF2 domain in response to heat shock, leading to stress granule disassembly: ubiquitination promotes interaction with the FAF2 adapter, followed by interaction with VCP, which extracts G3BP1 from stress granules, leading to stress granule disassembly. In case of prolonged stress, ubiquitination by TRIM21 leads to autophagy-dependent degradation of G3BP1 via recruitment of ubiquitinated G3BP1 by SQSTM1 and/or CALCOCO2 to autophagosomes. In terms of tissue distribution, ubiquitous.

The protein resides in the cytoplasm. The protein localises to the cytosol. It localises to the perikaryon. Its subcellular location is the stress granule. It is found in the nucleus. The enzyme catalyses ATP + H2O = ADP + phosphate + H(+). Its activity is regulated as follows. Under physiological conditions, G3BP1 adopts a compact state that is stabilized by intramolecular interactions between the RG-rich and the acidic regions that inhibit phase separation. Upon stress, polysomes disassemble and mRNAs are released in an unfolded protein-free state. Binding of unfolded mRNA to G3BP1 outcompetes the intramolecular interactions and RNA-bound G3BP1 adopts an expanded conformation in which the RG-rich region becomes exposed to engage in protein-protein and protein-RNA interactions, allowing physical cross-linking of RNA molecules to form protein-RNA condensates, leading to liquid-liquid phase separation (LLPS). In terms of biological role, protein involved in various processes, such as stress granule formation and innate immunity. Plays an essential role in stress granule formation. Stress granules are membraneless compartments that store mRNAs and proteins, such as stalled translation pre-initiation complexes, in response to stress. Promotes formation of stress granules phase-separated membraneless compartment by undergoing liquid-liquid phase separation (LLPS) upon unfolded RNA-binding: functions as a molecular switch that triggers RNA-dependent LLPS in response to a rise in intracellular free RNA concentrations. Also acts as an ATP- and magnesium-dependent helicase: unwinds DNA/DNA, RNA/DNA, and RNA/RNA substrates with comparable efficiency. Acts unidirectionally by moving in the 5' to 3' direction along the bound single-stranded DNA. Unwinds preferentially partial DNA and RNA duplexes having a 17 bp annealed portion and either a hanging 3' tail or hanging tails at both 5'- and 3'-ends. Plays an essential role in innate immunity by promoting CGAS and RIGI activity. Participates in the DNA-triggered cGAS/STING pathway by promoting the DNA binding and activation of CGAS. Triggers the condensation of cGAS, a process probably linked to the formation of membrane-less organelles. Also enhances RIGI-induced type I interferon production probably by helping RIGI at sensing pathogenic RNA. May also act as a phosphorylation-dependent sequence-specific endoribonuclease in vitro: Cleaves exclusively between cytosine and adenine and cleaves MYC mRNA preferentially at the 3'-UTR. The protein is Ras GTPase-activating protein-binding protein 1 (G3bp1) of Mus musculus (Mouse).